Consider the following 97-residue polypeptide: Large ribosomal subunit protein bL28 (97 aa).

This sequence belongs to the bacterial ribosomal protein bL28 family.

The protein is Large ribosomal subunit protein bL28 of Rickettsia akari (strain Hartford).